The sequence spans 451 residues: MPREIITLQLGQCGNQIGFEFWKQLCAEHGISPEGIVEEFATEGTDRKDVFFYQADDEHYIPRAVLLDLEPRVIHSILNSSYAKLYNPENIYLSEHGGGAGNNWGRGFSQGEKIHEDIFDIIDREADGSDSLEGFVLCHSIAGGTGSGLGSYLLERLNDRYPKKLVQTYSVFPNQDEMSDVVVQPYNSLLTLKRLTQNADCVVVLDNTALNRIATDRLHIQNPSFSQINQLVSTIMSASTTTLRYPGYMNNDLIGLIASLIPTPRLHFLMTGYTPLTTDQSVASVRKTTVLDVMRRLLQPKNVMVSTGRDRQTNHCYIAILNIIQGEVDPTQVHKSLQRIRERKLANFIPWGPASIQVALSRKSPYLPSAHRVSGLMMANHTSISSLFESSCQQYDKLWKRGAFLEQFRKEDIFKDNFEEMHRSREVVQELIDEYHAATRPDYISWGTQEQ.

Phosphoserine; by BRSK1 is present on serine 131. 142-148 contributes to the GTP binding site; sequence AGGTGSG.

This sequence belongs to the tubulin family. In terms of assembly, component of the gamma-tubulin ring complex (gTuRC) consisting of TUBGCP2, TUBGCP3, TUBGCP4, TUBGCP5 and TUBGCP6 and gamma-tubulin TUBG1 or TUBG2. TUBGCP2, TUBGCP3, TUBGCP4, TUBGCP5 and TUBGCP6 assemble in a 5:5:2:1:1 stoichiometry; each is associated with a gamma-tubulin, thereby arranging 14 gamma-tubulins in a helical manner. Gamma-tubulin at the first position is blocked by TUBGCP3 at the last position, allowing 13 protafilaments to grow into a microtubule. Interacts with alpha-beta tubulin heterodimers; the interaction allows microtubules to nucleate from the gTuRC. Post-translationally, phosphorylation at Ser-131 by BRSK1 regulates centrosome duplication, possibly by mediating relocation of gamma-tubulin and its associated proteins from the cytoplasm to the centrosome.

Its subcellular location is the cytoplasm. The protein localises to the cytoskeleton. The protein resides in the microtubule organizing center. It is found in the centrosome. Tubulin is the major constituent of microtubules, protein filaments consisting of alpha- and beta-tubulin heterodimers. Gamma-tubulin is a key component of the gamma-tubulin ring complex (gTuRC) which mediates microtubule nucleation. The gTuRC regulates the minus-end nucleation of alpha-beta tubulin heterodimers that grow into microtubule protafilaments, a critical step in centrosome duplication and spindle formation. This chain is Tubulin gamma-2 chain (Tubg2), found in Mus musculus (Mouse).